A 232-amino-acid chain; its full sequence is tRNA (guanine-N(1)-)-methyltransferase (232 aa).

Gly-116 is an S-adenosyl-L-methionine binding site.

This sequence belongs to the RNA methyltransferase TrmD family. Homodimer.

Its subcellular location is the cytoplasm. The catalysed reaction is guanosine(37) in tRNA + S-adenosyl-L-methionine = N(1)-methylguanosine(37) in tRNA + S-adenosyl-L-homocysteine + H(+). Functionally, specifically methylates guanosine-37 in various tRNAs. The sequence is that of tRNA (guanine-N(1)-)-methyltransferase from Chlorobium luteolum (strain DSM 273 / BCRC 81028 / 2530) (Pelodictyon luteolum).